The sequence spans 253 residues: Phosphoribosylaminoimidazole-succinocarboxamide synthase (253 aa).

This sequence belongs to the SAICAR synthetase family.

It catalyses the reaction 5-amino-1-(5-phospho-D-ribosyl)imidazole-4-carboxylate + L-aspartate + ATP = (2S)-2-[5-amino-1-(5-phospho-beta-D-ribosyl)imidazole-4-carboxamido]succinate + ADP + phosphate + 2 H(+). It functions in the pathway purine metabolism; IMP biosynthesis via de novo pathway; 5-amino-1-(5-phospho-D-ribosyl)imidazole-4-carboxamide from 5-amino-1-(5-phospho-D-ribosyl)imidazole-4-carboxylate: step 1/2. The protein is Phosphoribosylaminoimidazole-succinocarboxamide synthase of Jannaschia sp. (strain CCS1).